Reading from the N-terminus, the 355-residue chain is UDP-N-acetylglucosamine--N-acetylmuramyl-(pentapeptide) pyrophosphoryl-undecaprenol N-acetylglucosamine transferase (355 aa).

UDP-N-acetyl-alpha-D-glucosamine is bound by residues 14 to 16, asparagine 126, arginine 162, serine 190, isoleucine 243, 262 to 267, and glutamine 288; these read SGG and ALTVSE.

This sequence belongs to the glycosyltransferase 28 family. MurG subfamily.

The protein localises to the cell inner membrane. It catalyses the reaction di-trans,octa-cis-undecaprenyl diphospho-N-acetyl-alpha-D-muramoyl-L-alanyl-D-glutamyl-meso-2,6-diaminopimeloyl-D-alanyl-D-alanine + UDP-N-acetyl-alpha-D-glucosamine = di-trans,octa-cis-undecaprenyl diphospho-[N-acetyl-alpha-D-glucosaminyl-(1-&gt;4)]-N-acetyl-alpha-D-muramoyl-L-alanyl-D-glutamyl-meso-2,6-diaminopimeloyl-D-alanyl-D-alanine + UDP + H(+). The protein operates within cell wall biogenesis; peptidoglycan biosynthesis. Its function is as follows. Cell wall formation. Catalyzes the transfer of a GlcNAc subunit on undecaprenyl-pyrophosphoryl-MurNAc-pentapeptide (lipid intermediate I) to form undecaprenyl-pyrophosphoryl-MurNAc-(pentapeptide)GlcNAc (lipid intermediate II). The sequence is that of UDP-N-acetylglucosamine--N-acetylmuramyl-(pentapeptide) pyrophosphoryl-undecaprenol N-acetylglucosamine transferase from Blochmanniella pennsylvanica (strain BPEN).